The primary structure comprises 224 residues: Non-structural protein V (224 aa).

The segment covering 54–65 (QKNIQHPTASHQ) has biased composition (polar residues). Disordered stretches follow at residues 54-96 (QKNI…DPEP) and 150-171 (TEFK…GGHR). Zn(2+)-binding residues include His-170, Cys-189, Cys-193, Cys-205, Cys-207, Cys-210, Cys-214, and Cys-217.

The protein belongs to the paramyxoviruses V protein family. Interacts with host IFIH1/MDA5 and DHX58/LGP2. Forms with host DDB1, CUL4A, STAT1, STAT2 and STAT3 the mumps virus V-dependent complex (VDC).

Its subcellular location is the virion. The protein resides in the host cytoplasm. Functionally, plays an essential role in the inhibition of host immune response. Prevents the establishment of cellular antiviral state by blocking interferon-alpha/beta (IFN-alpha/beta) production and signaling pathway. Interacts with host IFIH1/MDA5 and DHX58/LGP2 to inhibit the transduction pathway involved in the activation of IFN-beta promoter, thus protecting the virus against cell antiviral state. Blocks the type I and II interferon signaling pathways by interacting with host STAT1, STAT2 and STAT3, and mediating their ubiquitination and subsequent proteasomal degradation. This is Non-structural protein V from Mumps virus (strain SBL) (MuV).